The sequence spans 235 residues: Phosphoribosylaminoimidazole-succinocarboxamide synthase (235 aa).

Belongs to the SAICAR synthetase family.

It carries out the reaction 5-amino-1-(5-phospho-D-ribosyl)imidazole-4-carboxylate + L-aspartate + ATP = (2S)-2-[5-amino-1-(5-phospho-beta-D-ribosyl)imidazole-4-carboxamido]succinate + ADP + phosphate + 2 H(+). Its pathway is purine metabolism; IMP biosynthesis via de novo pathway; 5-amino-1-(5-phospho-D-ribosyl)imidazole-4-carboxamide from 5-amino-1-(5-phospho-D-ribosyl)imidazole-4-carboxylate: step 1/2. This Clostridium perfringens (strain 13 / Type A) protein is Phosphoribosylaminoimidazole-succinocarboxamide synthase.